A 251-amino-acid chain; its full sequence is Zinc import ATP-binding protein ZnuC (251 aa).

One can recognise an ABC transporter domain in the interval 5 to 220 (VSLENVSVSF…PEFISMFGPR (216 aa)). An ATP-binding site is contributed by 37–44 (GPNGAGKS).

It belongs to the ABC transporter superfamily. Zinc importer (TC 3.A.1.15.5) family. In terms of assembly, the complex is composed of two ATP-binding proteins (ZnuC), two transmembrane proteins (ZnuB) and a solute-binding protein (ZnuA).

It localises to the cell inner membrane. The catalysed reaction is Zn(2+)(out) + ATP(in) + H2O(in) = Zn(2+)(in) + ADP(in) + phosphate(in) + H(+)(in). Part of the ABC transporter complex ZnuABC involved in zinc import. Responsible for energy coupling to the transport system. This chain is Zinc import ATP-binding protein ZnuC, found in Shigella flexneri serotype 5b (strain 8401).